A 60-amino-acid chain; its full sequence is Protein AC4 (60 aa).

It belongs to the geminiviridae protein AC4/C4 family.

Pathogenicity determinant. May act as a suppressor of RNA-mediated gene silencing, also known as post-transcriptional gene silencing (PTGS), a mechanism of plant viral defense that limits the accumulation of viral RNAs. The chain is Protein AC4 from Pepper huasteco yellow vein virus (PHYVV).